Consider the following 944-residue polypeptide: Calcium-transporting ATPase type 2C member 2 (944 aa).

Topologically, residues 1-104 (MGRRLKFLQK…DNAEPVWKKY (104 aa)) are cytoplasmic. The segment at 69–93 (VDLDSGLSEFAVAQRRLVHGWNEFV) is interaction with ORAI1. A helical membrane pass occupies residues 105–125 (LDQFRNPLILLLLGSSVVSVL). Residues 126–127 (TK) lie on the Extracellular side of the membrane. A helical transmembrane segment spans residues 128 to 148 (EYEDAVSIALAVLIVVTVGFI). The Cytoplasmic portion of the chain corresponds to 149 to 229 (QEYRSEKSLE…EVEPCGKTDS (81 aa)). A helical transmembrane segment spans residues 230–250 (PLADGGDLSTLSNVVFMGTLV). Topologically, residues 251–291 (QCGKGQGVVIGTGEQSQFGEVFKMMRAEETPKTPLQKSMDK) are extracellular. Phosphothreonine is present on threonine 262. The residue at position 266 (serine 266) is a Phosphoserine. The helical transmembrane segment at 292–312 (LGKQLTIFSFGIIGLLMLVGW) threads the bilayer. The Cytoplasmic portion of the chain corresponds to 313 to 329 (VQGKPFLSMFTVGVSLA). The Ca(2+) site is built by valine 330, alanine 331, isoleucine 333, and glutamate 335. Residues 330 to 350 (VAAIPEGLPIVVMVTLVLGVL) traverse the membrane as a helical segment. Residues 351 to 748 (RMAKKRVIVK…IAALSLITLS (398 aa)) are Extracellular-facing. Aspartate 377 functions as the 4-aspartylphosphate intermediate in the catalytic mechanism. Residues aspartate 672 and aspartate 676 each coordinate Mg(2+). A helical membrane pass occupies residues 749–769 (TVCNLPSPLNAMQILWVNIIM). Positions 766 and 770 each coordinate Ca(2+). Residues 770–802 (DGPPAQSLGVEPVDRDALRRPPRSVGDTILNRA) are Cytoplasmic-facing. Residues 803–823 (LILRVLMSAAVIIGGTLFIFW) form a helical membrane-spanning segment. At 824 to 835 (REIPANGTSTPR) the chain is on the extracellular side. A helical transmembrane segment spans residues 836–853 (TTTMAFTCFVFFDLFNAL). The Cytoplasmic segment spans residues 854–872 (SCRSQTKLIFEIGFFRNRM). The helical transmembrane segment at 873 to 893 (FLYSVLGSLLGQLAVIYAPPL) threads the bilayer. Residues 894–903 (QKVFQTENLS) lie on the Extracellular side of the membrane. A helical membrane pass occupies residues 904–924 (ALDLLLLTGLASSVFILSELL). Residues 925-944 (KLWEKFLSRARPTQMLPEAV) lie on the Cytoplasmic side of the membrane.

It belongs to the cation transport ATPase (P-type) (TC 3.A.3) family. Type IIA subfamily. As to quaternary structure, interacts (via N-terminus) with ORAI1 (via N- and C-termini); this interaction regulates Ca(2+) influx at the plasma membrane. In terms of tissue distribution, expressed in hippocampal neurons (at protein level). Expressed in lactating mammary epithelium (at protein level).

The protein resides in the golgi apparatus. The protein localises to the trans-Golgi network membrane. Its subcellular location is the cell membrane. It localises to the basolateral cell membrane. The catalysed reaction is Ca(2+)(in) + ATP + H2O = Ca(2+)(out) + ADP + phosphate + H(+). The enzyme catalyses Mn(2+)(in) + ATP + H2O = Mn(2+)(out) + ADP + phosphate + H(+). In terms of biological role, ATP-driven pump that supplies the Golgi apparatus with Ca(2+) and Mn(2+) ions, both essential cofactors for processing and trafficking of newly synthesized proteins in the secretory pathway. Within a catalytic cycle, acquires Ca(2+) or Mn(2+) ions on the cytoplasmic side of the membrane and delivers them to the lumenal side. The transfer of ions across the membrane is coupled to ATP hydrolysis and is associated with a transient phosphorylation that shifts the pump conformation from inward-facing to outward-facing state. Induces Ca(2+) influx independently of its ATP-driven pump function. At the basolateral membrane of mammary epithelial cells, interacts with Ca(2+) channel ORAI1 and mediates Ca(2+) entry independently of the Ca(2+) content of endoplasmic reticulum or Golgi stores. May facilitate transepithelial transport of large quantities of Ca(2+) for milk secretion via activation of Ca(2+) influx channels at the plasma membrane and active Ca(2+) transport at the Golgi apparatus. In Mus musculus (Mouse), this protein is Calcium-transporting ATPase type 2C member 2.